Consider the following 203-residue polypeptide: Venom allergen 5 (203 aa).

Intrachain disulfides connect cysteine 4/cysteine 15, cysteine 7/cysteine 100, cysteine 25/cysteine 93, and cysteine 169/cysteine 186. Residues 45–188 form the SCP domain; it reads KRHNEFRQKV…WHTHYLVCNY (144 aa).

Belongs to the CRISP family. Venom allergen 5-like subfamily. Expressed by the venom gland.

It localises to the secreted. This Dolichovespula arenaria (Yellow hornet) protein is Venom allergen 5.